Reading from the N-terminus, the 348-residue chain is Small ribosomal subunit biogenesis GTPase RsgA (348 aa).

The span at 1–14 (MAKRKLSKQQKWRI) shows a compositional bias: basic residues. The interval 1-39 (MAKRKLSKQQKWRIQKIQDERTKRATRKETQLESQLSGG) is disordered. Basic and acidic residues predominate over residues 16 to 31 (KIQDERTKRATRKETQ). The CP-type G domain occupies 116–275 (FGQLKPIAAN…LIDSPGIREF (160 aa)). GTP is bound by residues 163–166 (NKQD) and 217–225 (GQSGVGKSS). Zn(2+) contacts are provided by cysteine 299, cysteine 304, histidine 306, and cysteine 312.

Belongs to the TRAFAC class YlqF/YawG GTPase family. RsgA subfamily. Monomer. Associates with 30S ribosomal subunit, binds 16S rRNA. The cofactor is Zn(2+).

It is found in the cytoplasm. One of several proteins that assist in the late maturation steps of the functional core of the 30S ribosomal subunit. Helps release RbfA from mature subunits. May play a role in the assembly of ribosomal proteins into the subunit. Circularly permuted GTPase that catalyzes slow GTP hydrolysis, GTPase activity is stimulated by the 30S ribosomal subunit. The sequence is that of Small ribosomal subunit biogenesis GTPase RsgA from Hahella chejuensis (strain KCTC 2396).